We begin with the raw amino-acid sequence, 232 residues long: 2,3,4,5-tetrahydropyridine-2,6-dicarboxylate N-acetyltransferase (232 aa).

This sequence belongs to the transferase hexapeptide repeat family. DapH subfamily.

It catalyses the reaction (S)-2,3,4,5-tetrahydrodipicolinate + acetyl-CoA + H2O = L-2-acetamido-6-oxoheptanedioate + CoA. Its pathway is amino-acid biosynthesis; L-lysine biosynthesis via DAP pathway; LL-2,6-diaminopimelate from (S)-tetrahydrodipicolinate (acetylase route): step 1/3. Catalyzes the transfer of an acetyl group from acetyl-CoA to tetrahydrodipicolinate. The sequence is that of 2,3,4,5-tetrahydropyridine-2,6-dicarboxylate N-acetyltransferase from Streptococcus pneumoniae serotype 2 (strain D39 / NCTC 7466).